We begin with the raw amino-acid sequence, 169 residues long: 6,7-dimethyl-8-ribityllumazine synthase (169 aa).

Residues tyrosine 30, 61–63 (ALE), and 90–92 (CVI) contribute to the 5-amino-6-(D-ribitylamino)uracil site. Position 95–96 (95–96 (ET)) interacts with (2S)-2-hydroxy-3-oxobutyl phosphate. Histidine 98 serves as the catalytic Proton donor. Asparagine 123 provides a ligand contact to 5-amino-6-(D-ribitylamino)uracil. Arginine 137 contributes to the (2S)-2-hydroxy-3-oxobutyl phosphate binding site.

This sequence belongs to the DMRL synthase family.

The catalysed reaction is (2S)-2-hydroxy-3-oxobutyl phosphate + 5-amino-6-(D-ribitylamino)uracil = 6,7-dimethyl-8-(1-D-ribityl)lumazine + phosphate + 2 H2O + H(+). Its pathway is cofactor biosynthesis; riboflavin biosynthesis; riboflavin from 2-hydroxy-3-oxobutyl phosphate and 5-amino-6-(D-ribitylamino)uracil: step 1/2. Its function is as follows. Catalyzes the formation of 6,7-dimethyl-8-ribityllumazine by condensation of 5-amino-6-(D-ribitylamino)uracil with 3,4-dihydroxy-2-butanone 4-phosphate. This is the penultimate step in the biosynthesis of riboflavin. The polypeptide is 6,7-dimethyl-8-ribityllumazine synthase (Methylorubrum populi (strain ATCC BAA-705 / NCIMB 13946 / BJ001) (Methylobacterium populi)).